Consider the following 56-residue polypeptide: Small ribosomal subunit protein uS14 (56 aa).

Positions 21, 24, 39, and 42 each coordinate Zn(2+).

This sequence belongs to the universal ribosomal protein uS14 family. Component of the 40S small ribosomal subunit. The cofactor is Zn(2+).

The protein resides in the cytoplasm. It localises to the cytosol. It is found in the rough endoplasmic reticulum. Its function is as follows. Component of the small ribosomal subunit. The ribosome is a large ribonucleoprotein complex responsible for the synthesis of proteins in the cell. This Hippocampus comes (Tiger tail seahorse) protein is Small ribosomal subunit protein uS14 (rps29).